Reading from the N-terminus, the 256-residue chain is MNDIWWQTYGEGNCHLVLLHGWGLNAEVWHCIREELGSHFTLHLVDLPGYGRSSGFGAMTLEEMTAQVAKNAPDQAIWLGWSLGGLVASQMAFTHPERVQALVTVASSPCFSAREGWPGIKPEILGGFQQQLSDDFQRTVERFLALQTLGTETARQDARTLKSVVLAQPMPDVEVLNGGLEILKTVDLREALKNVNMPFLRLYGYLDGLVPRKIAPLLDTLWPHSTSQIMEKAAHAPFISHPAAFCQALMTLKSSL.

One can recognise an AB hydrolase-1 domain in the interval His15 to Pro242. Substrate contacts are provided by residues Trp22, Ser82–Leu83, and Phe143–Gln147. Ser82 functions as the Nucleophile in the catalytic mechanism. Active-site residues include Asp207 and His235. His235 is a substrate binding site.

Belongs to the AB hydrolase superfamily. Carboxylesterase BioH family. In terms of assembly, monomer.

It localises to the cytoplasm. The enzyme catalyses 6-carboxyhexanoyl-[ACP] methyl ester + H2O = 6-carboxyhexanoyl-[ACP] + methanol + H(+). Its pathway is cofactor biosynthesis; biotin biosynthesis. Functionally, the physiological role of BioH is to remove the methyl group introduced by BioC when the pimeloyl moiety is complete. It allows to synthesize pimeloyl-ACP via the fatty acid synthetic pathway through the hydrolysis of the ester bonds of pimeloyl-ACP esters. This chain is Pimeloyl-[acyl-carrier protein] methyl ester esterase, found in Salmonella newport (strain SL254).